Reading from the N-terminus, the 291-residue chain is MDMGFHENEQNQEFANLMEIGSGHYGCSHYRRRCKIRAPCCDEIFDCRHCHNEAKDSLHIEQHHRHELPRHEVSKVICSLCETEQDVQQNCSNCGVCMGKYFCSKCKFFDDDLSKKQYHCDECGICRTGGEENFFHCKRCRCCYSKIMEDKHQCVEGAMHHNCPVCFEYLFDSTRDITVLRCGHTMHLECTKDMGLHNRYTCPVCSKSICDMSNLWKKLDEEVAAYPMPKMYENKMVWILCNDCGSNTNVRFHLIAHKCSSCGSYNTRQTQRGSDSHSCSSGMPQVVGSTG.

The CHY-type zinc-finger motif lies at I20–V96. The Zn(2+) site is built by C27, H29, C40, C41, C47, C50, H51, H66, C78, C81, C91, C94, C103, C106, H119, C120, C123, C126, H136, C137, C140, C143, H152, and C154. The segment at M98 to N162 adopts a CTCHY-type zinc-finger fold. An RING-type; atypical zinc finger spans residues C163–S206. Position 173 is a phosphoserine (S173). T178 carries the phosphothreonine modification. Phosphoserine is present on S208. A disordered region spans residues Q271 to G291.

As to quaternary structure, interacts with SRK2D/2SNRK2.2, SRK2I/SNRK2.3 and SRK2E/SNRK2.6. In terms of processing, phosphorylated at Ser-173, Thr-178 and Ser-208 by SRK2E/SNRK2.6 in response to abscisic acid (ABA). Phosphorylation activates its E3 ubiquitin-protein ligase activity. Expressed in roots, leaves, and anthers and stigma of open flowers.

It localises to the nucleus. The protein resides in the cytoplasm. The protein localises to the endoplasmic reticulum. It carries out the reaction S-ubiquitinyl-[E2 ubiquitin-conjugating enzyme]-L-cysteine + [acceptor protein]-L-lysine = [E2 ubiquitin-conjugating enzyme]-L-cysteine + N(6)-ubiquitinyl-[acceptor protein]-L-lysine.. It functions in the pathway protein modification; protein ubiquitination. Its function is as follows. Possesses E3 ubiquitin-protein ligase activity in vitro. Mediates mainly 'Lys-48'-linked polyubiquitination. Promotes abscisic acid (ABA)-induced stomatal closure, reactive oxygen species (ROS) production and drought tolerance. Involved in the regulation of stomatal aperture. The protein is E3 ubiquitin-protein ligase RZFP34 of Arabidopsis thaliana (Mouse-ear cress).